Here is a 405-residue protein sequence, read N- to C-terminus: Phosphoglycerate kinase (405 aa).

Substrate-binding positions include 24–26 (DFN), Arg-40, 63–66 (HLGR), Arg-122, and Arg-162. ATP contacts are provided by residues Lys-212, Glu-331, and 361 to 364 (GGDS).

The protein belongs to the phosphoglycerate kinase family. As to quaternary structure, monomer.

It localises to the cytoplasm. The catalysed reaction is (2R)-3-phosphoglycerate + ATP = (2R)-3-phospho-glyceroyl phosphate + ADP. It participates in carbohydrate degradation; glycolysis; pyruvate from D-glyceraldehyde 3-phosphate: step 2/5. This Corynebacterium glutamicum (strain ATCC 13032 / DSM 20300 / JCM 1318 / BCRC 11384 / CCUG 27702 / LMG 3730 / NBRC 12168 / NCIMB 10025 / NRRL B-2784 / 534) protein is Phosphoglycerate kinase (pgk).